Consider the following 342-residue polypeptide: MVKVYYNGDIKENVLAGKKVAIIGYGSQGHAHALNLKESGIDVIVGVRQGKSFTQAQEDGHQVFSVREAAAQADIIMVLLPDEQQQKVYEAEIKDELTAGKSLVFAHGFNVHFHQIVPPADVDVFLVAPKGPGHLVRRTYEQGAGVPALFAIYQDVSGEAKDTALAYAKGIGGARAGVLETTFKEETETDLFGEQAVLCGGLTALVKAGFETLTEAGYQPELAYFECLHELKLIVDLMYEEGLAGMRYSISDTAQWGDFVSGPRVVDAKVKESMKQVLTDIQNGTFAKEWIVENQVNRPRFNAINASENEHQIEKVGRQLREMMPFVKQGKKKEAVVSVAQN.

Residues 2 to 181 (VKVYYNGDIK…GGARAGVLET (180 aa)) form the KARI N-terminal Rossmann domain. Residues 25-28 (YGSQ), Arg-48, Ser-52, and 82-85 (DEQQ) each bind NADP(+). His-107 is a catalytic residue. Gly-133 provides a ligand contact to NADP(+). Residues 182–327 (TFKEETETDL…RQLREMMPFV (146 aa)) form the KARI C-terminal knotted domain. 4 residues coordinate Mg(2+): Asp-190, Glu-194, Glu-226, and Glu-230. Ser-251 serves as a coordination point for substrate.

The protein belongs to the ketol-acid reductoisomerase family. Requires Mg(2+) as cofactor.

The catalysed reaction is (2R)-2,3-dihydroxy-3-methylbutanoate + NADP(+) = (2S)-2-acetolactate + NADPH + H(+). It carries out the reaction (2R,3R)-2,3-dihydroxy-3-methylpentanoate + NADP(+) = (S)-2-ethyl-2-hydroxy-3-oxobutanoate + NADPH + H(+). The protein operates within amino-acid biosynthesis; L-isoleucine biosynthesis; L-isoleucine from 2-oxobutanoate: step 2/4. Its pathway is amino-acid biosynthesis; L-valine biosynthesis; L-valine from pyruvate: step 2/4. Involved in the biosynthesis of branched-chain amino acids (BCAA). Catalyzes an alkyl-migration followed by a ketol-acid reduction of (S)-2-acetolactate (S2AL) to yield (R)-2,3-dihydroxy-isovalerate. In the isomerase reaction, S2AL is rearranged via a Mg-dependent methyl migration to produce 3-hydroxy-3-methyl-2-ketobutyrate (HMKB). In the reductase reaction, this 2-ketoacid undergoes a metal-dependent reduction by NADPH to yield (R)-2,3-dihydroxy-isovalerate. The sequence is that of Ketol-acid reductoisomerase (NADP(+)) from Bacillus velezensis (strain DSM 23117 / BGSC 10A6 / LMG 26770 / FZB42) (Bacillus amyloliquefaciens subsp. plantarum).